Reading from the N-terminus, the 188-residue chain is MTTQPPQDQTSTTPSLPPHLDPTTYPRTLTSATHNIHLELTYSTLNPTVALEHTSSPAAGANVLFLGTTRNTFEGRAVSQLSYTSYPPLALKSLMSIATRAAEKFDLKGVYIAHRLGVVPISEASIVVAVSAGHRGMAWKAGEEVLEEVKEKVEIWKREEFVDGGMEWRENRERDAEGRLLSSTEGGK.

Residues 1–14 show a composition bias toward low complexity; the sequence is MTTQPPQDQTSTTP. The tract at residues 1–23 is disordered; the sequence is MTTQPPQDQTSTTPSLPPHLDPT. Substrate contacts are provided by residues 134-135, Lys150, and 157-159; these read HR and KRE.

Belongs to the MoaE family. MOCS2B subfamily. As to quaternary structure, heterotetramer; composed of 2 small (MOCS2A) and 2 large (MOCS2B) subunits.

The protein resides in the cytoplasm. It carries out the reaction 2 [molybdopterin-synthase sulfur-carrier protein]-C-terminal-Gly-aminoethanethioate + cyclic pyranopterin phosphate + H2O = molybdopterin + 2 [molybdopterin-synthase sulfur-carrier protein]-C-terminal Gly-Gly + 2 H(+). It participates in cofactor biosynthesis; molybdopterin biosynthesis. Functionally, catalytic subunit of the molybdopterin synthase complex, a complex that catalyzes the conversion of precursor Z into molybdopterin. Acts by mediating the incorporation of 2 sulfur atoms from thiocarboxylated MOCS2A into precursor Z to generate a dithiolene group. This Neosartorya fischeri (strain ATCC 1020 / DSM 3700 / CBS 544.65 / FGSC A1164 / JCM 1740 / NRRL 181 / WB 181) (Aspergillus fischerianus) protein is Molybdopterin synthase catalytic subunit.